The primary structure comprises 353 residues: Protein MGF 360-13L (353 aa).

It belongs to the asfivirus MGF 360 family.

Functionally, plays a role in virus cell tropism, and may be required for efficient virus replication in macrophages. The chain is Protein MGF 360-13L from Ornithodoros (relapsing fever ticks).